The following is a 99-amino-acid chain: U1-theraphotoxin-Tal1a (99 aa).

Residues 1–22 (MNTIQVIIFAVVLVLTVTVGQA) form the signal peptide. A propeptide spanning residues 23–57 (DEDSAETSLLRKLKEAEASLFGQHLEESQHSREKR) is cleaved from the precursor. Intrachain disulfides connect Cys58/Cys73, Cys65/Cys78, and Cys72/Cys93. At Ser98 the chain carries Serine amide.

The protein belongs to the neurotoxin 14 (magi-1) family. 08 (Ltx-4) subfamily. As to expression, expressed by the venom gland.

It is found in the secreted. In terms of biological role, insecticidal toxin that shows strong lethal effects on American cockroaches (P.americana) and common mealbeetle (T.molitor). Possibly acts by blocking ion channel currents. Also shows significant analgesic effects in mice models of pain including abdominal writhing induced by acetic acid and formalin-induced paw licking tests. In addition, exerts marked inhibition of proliferation of some human tumor cell lines including C8166, Molt-4, A-549, BIU-87, T24, and Calu-6. The chain is U1-theraphotoxin-Tal1a from Tliltocatl albopilosus (Curlyhair tarantula).